Reading from the N-terminus, the 334-residue chain is S-adenosylmethionine decarboxylase proenzyme (334 aa).

Residue phenylalanine 7 participates in substrate binding. Catalysis depends on residues glutamate 8 and glutamate 11. Position 67 (glutamate 67) interacts with substrate. Serine 68 functions as the Schiff-base intermediate with substrate; via pyruvic acid in the catalytic mechanism. Serine 68 carries the post-translational modification Pyruvic acid (Ser); by autocatalysis. The active-site Proton donor; for catalytic activity is the cysteine 82. Phenylalanine 223 is a binding site for substrate. Catalysis depends on proton acceptor; for processing activity residues serine 229 and histidine 243. Residue glutamate 247 coordinates substrate. Serine 298 is modified (phosphoserine).

This sequence belongs to the eukaryotic AdoMetDC family. As to quaternary structure, heterotetramer of two alpha and two beta chains. Requires pyruvate as cofactor. In terms of processing, is synthesized initially as an inactive proenzyme. Formation of the active enzyme involves a self-maturation process in which the active site pyruvoyl group is generated from an internal serine residue via an autocatalytic post-translational modification. Two non-identical subunits are generated from the proenzyme in this reaction, and the pyruvate is formed at the N-terminus of the alpha chain, which is derived from the carboxyl end of the proenzyme. The post-translation cleavage follows an unusual pathway, termed non-hydrolytic serinolysis, in which the side chain hydroxyl group of the serine supplies its oxygen atom to form the C-terminus of the beta chain, while the remainder of the serine residue undergoes an oxidative deamination to produce ammonia and the pyruvoyl group blocking the N-terminus of the alpha chain.

It carries out the reaction S-adenosyl-L-methionine + H(+) = S-adenosyl 3-(methylsulfanyl)propylamine + CO2. Its pathway is amine and polyamine biosynthesis; S-adenosylmethioninamine biosynthesis; S-adenosylmethioninamine from S-adenosyl-L-methionine: step 1/1. Its function is as follows. Essential for biosynthesis of the polyamines spermidine and spermine. Promotes maintenance and self-renewal of embryonic stem cells, by maintaining spermine levels. In Mesocricetus auratus (Golden hamster), this protein is S-adenosylmethionine decarboxylase proenzyme (AMD1).